We begin with the raw amino-acid sequence, 62 residues long: Large ribosomal subunit protein bL28 (62 aa).

Residues 1–26 (MARKCYVTGKSPKSGNNRSHALNKTK) are disordered. The span at 11–20 (SPKSGNNRSH) shows a compositional bias: polar residues.

This sequence belongs to the bacterial ribosomal protein bL28 family.

In Exiguobacterium sp. (strain ATCC BAA-1283 / AT1b), this protein is Large ribosomal subunit protein bL28.